A 153-amino-acid polypeptide reads, in one-letter code: Ribosome maturation factor RimP (153 aa).

It belongs to the RimP family.

The protein localises to the cytoplasm. Its function is as follows. Required for maturation of 30S ribosomal subunits. This is Ribosome maturation factor RimP from Trichormus variabilis (strain ATCC 29413 / PCC 7937) (Anabaena variabilis).